The following is a 601-amino-acid chain: Elongation factor 4 (601 aa).

Residues 7-189 (RNIRNFSIIA…AIVHRIPPPA (183 aa)) enclose the tr-type G domain. Residues 19–24 (DHGKST) and 136–139 (NKID) contribute to the GTP site.

The protein belongs to the TRAFAC class translation factor GTPase superfamily. Classic translation factor GTPase family. LepA subfamily.

The protein localises to the cell inner membrane. The catalysed reaction is GTP + H2O = GDP + phosphate + H(+). In terms of biological role, required for accurate and efficient protein synthesis under certain stress conditions. May act as a fidelity factor of the translation reaction, by catalyzing a one-codon backward translocation of tRNAs on improperly translocated ribosomes. Back-translocation proceeds from a post-translocation (POST) complex to a pre-translocation (PRE) complex, thus giving elongation factor G a second chance to translocate the tRNAs correctly. Binds to ribosomes in a GTP-dependent manner. This Xanthomonas oryzae pv. oryzae (strain MAFF 311018) protein is Elongation factor 4.